The primary structure comprises 246 residues: Bis(5'-nucleosyl)-tetraphosphatase PrpE [asymmetrical] (246 aa).

Belongs to the PrpE family. Ni(2+) is required as a cofactor.

It catalyses the reaction P(1),P(4)-bis(5'-guanosyl) tetraphosphate + H2O = GMP + GTP + 2 H(+). Asymmetrically hydrolyzes Ap4p to yield AMP and ATP. The polypeptide is Bis(5'-nucleosyl)-tetraphosphatase PrpE [asymmetrical] (Bacillus anthracis (strain A0248)).